Reading from the N-terminus, the 314-residue chain is Hydroxyacyl-coenzyme A dehydrogenase, mitochondrial (314 aa).

A mitochondrion-targeting transit peptide spans 1-12 (MAFVTRQFVRSM). NAD(+) is bound by residues 34-39 (GGGLMG) and Asp-57. Residue Ser-73 participates in CoA binding. Lys-75 carries the post-translational modification N6-acetyllysine. CoA is bound at residue Lys-80. Position 80 is an N6-succinyllysine (Lys-80). N6-acetyllysine; alternate occurs at positions 81 and 87. 2 positions are modified to N6-succinyllysine; alternate: Lys-81 and Lys-87. NAD(+) is bound at residue Glu-122. The residue at position 125 (Lys-125) is an N6-acetyllysine. Lys-127 contacts NAD(+). Lys-127 carries the post-translational modification N6-(2-hydroxyisobutyryl)lysine. Lys-136 is subject to N6-acetyllysine; alternate. Position 136 is an N6-succinyllysine; alternate (Lys-136). NAD(+) is bound by residues Ser-149 and Asn-173. Ser-149 is a CoA binding site. Residue Lys-179 is modified to N6-acetyllysine. N6-acetyllysine; alternate occurs at positions 185, 192, and 202. 3 positions are modified to N6-succinyllysine; alternate: Lys-185, Lys-192, and Lys-202. The residue at position 206 (Lys-206) is an N6-succinyllysine. Residues Lys-212 and Lys-241 each carry the N6-acetyllysine; alternate modification. 2 positions are modified to N6-succinyllysine; alternate: Lys-212 and Lys-241. Residue Lys-305 participates in NAD(+) binding. An N6-acetyllysine; alternate modification is found at Lys-312. Residue Lys-312 is modified to N6-succinyllysine; alternate.

The protein belongs to the 3-hydroxyacyl-CoA dehydrogenase family. In terms of assembly, homodimer. Interacts with GLUD1; this interaction inhibits the activation of glutamate dehydrogenase 1 (GLUD1). Succinylation at Lys-81, adjacent to a coenzyme A binding site. Desuccinylated by SIRT5.

It localises to the mitochondrion matrix. The enzyme catalyses a (3S)-3-hydroxyacyl-CoA + NAD(+) = a 3-oxoacyl-CoA + NADH + H(+). It carries out the reaction (3S)-3-hydroxybutanoyl-CoA + NAD(+) = acetoacetyl-CoA + NADH + H(+). It catalyses the reaction (3S)-hydroxydecanoyl-CoA + NAD(+) = 3-oxodecanoyl-CoA + NADH + H(+). The catalysed reaction is (3S)-hydroxyhexadecanoyl-CoA + NAD(+) = 3-oxohexadecanoyl-CoA + NADH + H(+). It functions in the pathway lipid metabolism; fatty acid beta-oxidation. Mitochondrial fatty acid beta-oxidation enzyme that catalyzes the third step of the beta-oxidation cycle for medium and short-chain 3-hydroxy fatty acyl-CoAs (C4 to C10). Plays a role in the control of insulin secretion by inhibiting the activation of glutamate dehydrogenase 1 (GLUD1), an enzyme that has an important role in regulating amino acid-induced insulin secretion. Plays a role in the maintenance of normal spermatogenesis through the reduction of fatty acid accumulation in the testes. This Rattus norvegicus (Rat) protein is Hydroxyacyl-coenzyme A dehydrogenase, mitochondrial (Hadh).